Reading from the N-terminus, the 185-residue chain is Ribosome-recycling factor (185 aa).

Belongs to the RRF family.

Its subcellular location is the cytoplasm. Its function is as follows. Responsible for the release of ribosomes from messenger RNA at the termination of protein biosynthesis. May increase the efficiency of translation by recycling ribosomes from one round of translation to another. This Edwardsiella ictaluri (strain 93-146) protein is Ribosome-recycling factor.